The primary structure comprises 201 residues: Ran-specific GTPase-activating protein (201 aa).

Residues 1–26 show a composition bias toward basic and acidic residues; sequence MAAAKDTHEDHDTSTENTDESNHDPQ. The disordered stretch occupies residues 1–35; the sequence is MAAAKDTHEDHDTSTENTDESNHDPQFEPIVSLPE. The residue at position 2 (Ala-2) is an N-acetylalanine. Thr-13 and Thr-18 each carry phosphothreonine. Phosphoserine is present on residues Ser-21 and Ser-60. The RanBD1 domain maps to 26–164; sequence QFEPIVSLPE…FEECRKEIEE (139 aa). Lys-150 carries the N6-acetyllysine; alternate modification. Lys-150 bears the N6-succinyllysine; alternate mark. A disordered region spans residues 163–201; sequence EEREKKAGSGKNDHAEKVAEKLEALSVKEETKEDAEEKQ. Lys-183 is modified (N6-acetyllysine). Ser-188 carries the post-translational modification Phosphoserine. A Glycyl lysine isopeptide (Lys-Gly) (interchain with G-Cter in SUMO2) cross-link involves residue Lys-190.

This sequence belongs to the RANBP1 family. As to quaternary structure, interacts with RAN (via C-terminus of GTP-bound form) but not with GDP-bound RAN. Identified in a complex composed of RAN, RANGAP1 and RANBP1. Identified in a complex that contains TNPO1, RAN and RANBP1. Identified in a complex that contains CSE1L, KPNA2, RAN and RANBP1. Identified in a complex with nucleotide-free RAN and RCC1.

In terms of biological role, plays a role in RAN-dependent nucleocytoplasmic transport. Alleviates the TNPO1-dependent inhibition of RAN GTPase activity and mediates the dissociation of RAN from proteins involved in transport into the nucleus. Induces a conformation change in the complex formed by XPO1 and RAN that triggers the release of the nuclear export signal of cargo proteins. Promotes the disassembly of the complex formed by RAN and importin beta. Promotes dissociation of RAN from a complex with KPNA2 and CSE1L. Required for normal mitotic spindle assembly and normal progress through mitosis via its effect on RAN. Does not increase the RAN GTPase activity by itself, but increases GTP hydrolysis mediated by RANGAP1. Inhibits RCC1-dependent exchange of RAN-bound GDP by GTP. The protein is Ran-specific GTPase-activating protein (RANBP1) of Homo sapiens (Human).